The primary structure comprises 1537 residues: DNA-directed RNA polymerase subunit beta' (1537 aa).

Residues Cys57, Cys59, Cys72, and Cys75 each contribute to the Zn(2+) site. 3 residues coordinate Mg(2+): Asp746, Asp748, and Asp750. Residues Cys1120, Cys1201, Cys1208, and Cys1211 each contribute to the Zn(2+) site. The segment at Leu1502 to Asp1537 is disordered. 2 stretches are compositionally biased toward polar residues: residues Gly1506–Gln1519 and Pro1526–Asp1537.

This sequence belongs to the RNA polymerase beta' chain family. The RNAP catalytic core consists of 2 alpha, 1 beta, 1 beta' and 1 omega subunit. When a sigma factor is associated with the core the holoenzyme is formed, which can initiate transcription. The cofactor is Mg(2+). Requires Zn(2+) as cofactor.

The catalysed reaction is RNA(n) + a ribonucleoside 5'-triphosphate = RNA(n+1) + diphosphate. Functionally, DNA-dependent RNA polymerase catalyzes the transcription of DNA into RNA using the four ribonucleoside triphosphates as substrates. This Deinococcus geothermalis (strain DSM 11300 / CIP 105573 / AG-3a) protein is DNA-directed RNA polymerase subunit beta'.